The primary structure comprises 264 residues: COP9 signalosome complex subunit 7b (264 aa).

At Ala-2 the chain carries N-acetylalanine. Positions 2–159 (AGEQKPSSNL…QLLEVDFCIG (158 aa)) constitute a PCI domain. Residues 188-237 (IEQQVLRANQYKENHNRTQQQVEAEVTNIKKTLKATASSSAQEMEQQLAE) are a coiled coil. Residues 223–232 (TASSSAQEME) are compositionally biased toward polar residues. Positions 223 to 264 (TASSSAQEMEQQLAERECPPHAEQRQPTKKMSKVKGLVSSRH) are disordered. Basic and acidic residues predominate over residues 235–248 (LAERECPPHAEQRQ). Ser-261 carries the post-translational modification Phosphothreonine. Arg-263 is modified (phosphoserine).

Belongs to the CSN7/EIF3M family. CSN7 subfamily. Component of the CSN complex, composed of COPS1/GPS1, COPS2, COPS3, COPS4, COPS5, COPS6, COPS7 (COPS7A or COPS7B), COPS8 and COPS9 isoform 1. In the complex, it probably interacts directly with COPS1, COPS2, COPS4, COPS5, COPS6 and COPS8. Interacts with EIF3S6. In terms of assembly, (Microbial infection) Interacts with vaccinia virus protein C9L.

It is found in the cytoplasm. Its subcellular location is the nucleus. In terms of biological role, component of the COP9 signalosome complex (CSN), a complex involved in various cellular and developmental processes. The CSN complex is an essential regulator of the ubiquitin (Ubl) conjugation pathway by mediating the deneddylation of the cullin subunits of SCF-type E3 ligase complexes, leading to decrease the Ubl ligase activity of SCF-type complexes such as SCF, CSA or DDB2. The complex is also involved in phosphorylation of p53/TP53, JUN, I-kappa-B-alpha/NFKBIA, ITPK1 and IRF8/ICSBP, possibly via its association with CK2 and PKD kinases. CSN-dependent phosphorylation of TP53 and JUN promotes and protects degradation by the Ubl system, respectively. The chain is COP9 signalosome complex subunit 7b (COPS7B) from Homo sapiens (Human).